The chain runs to 177 residues: Large ribosomal subunit protein uL6 (177 aa).

This sequence belongs to the universal ribosomal protein uL6 family. As to quaternary structure, part of the 50S ribosomal subunit.

This protein binds to the 23S rRNA, and is important in its secondary structure. It is located near the subunit interface in the base of the L7/L12 stalk, and near the tRNA binding site of the peptidyltransferase center. The chain is Large ribosomal subunit protein uL6 from Roseobacter denitrificans (strain ATCC 33942 / OCh 114) (Erythrobacter sp. (strain OCh 114)).